The chain runs to 24 residues: Flavin reductase (NADPH) (24 aa).

4 residues coordinate NADP(+): G9, T11, G12, and T14.

Belongs to the BLVRB family. In terms of assembly, monomer. In terms of tissue distribution, detected in erythrocytes (at protein level).

It localises to the cytoplasm. It carries out the reaction reduced riboflavin + NADP(+) = riboflavin + NADPH + 2 H(+). The enzyme catalyses bilirubin IXbeta + NADP(+) = biliverdin IXbeta + NADPH + H(+). The catalysed reaction is FMNH2 + NAD(+) = FMN + NADH + 2 H(+). It catalyses the reaction FMNH2 + NADP(+) = FMN + NADPH + 2 H(+). It carries out the reaction S-nitroso-CoA + L-cysteinyl-[protein] = S-nitroso-L-cysteinyl-[protein] + CoA. The enzyme catalyses L-cysteinyl-[SCAN] + S-nitroso-CoA = S-nitroso-L-cysteinyl-[SCAN] + CoA. The catalysed reaction is S-nitroso-L-cysteinyl-[SCAN] + L-cysteinyl-[protein] = L-cysteinyl-[SCAN] + S-nitroso-L-cysteinyl-[protein]. Functionally, enzyme that can both act as a NAD(P)H-dependent reductase and a S-nitroso-CoA-dependent nitrosyltransferase. Promotes fetal heme degradation during development. Also expressed in adult tissues, where it acts as a regulator of hematopoiesis, intermediary metabolism (glutaminolysis, glycolysis, TCA cycle and pentose phosphate pathway) and insulin signaling. Has a broad specificity oxidoreductase activity by catalyzing the NAD(P)H-dependent reduction of a variety of flavins, such as riboflavin, FAD or FMN, biliverdins, methemoglobin and PQQ (pyrroloquinoline quinone). Contributes to fetal heme catabolism by catalyzing reduction of biliverdin IXbeta into bilirubin IXbeta in the liver. Biliverdin IXbeta, which constitutes the major heme catabolite in the fetus is not present in adult. Does not reduce bilirubin IXalpha. Can also reduce the complexed Fe(3+) iron to Fe(2+) in the presence of FMN and NADPH. Acts as a protein nitrosyltransferase by catalyzing nitrosylation of cysteine residues of target proteins, such as HMOX2, INSR and IRS1. S-nitroso-CoA-dependent nitrosyltransferase activity is mediated via a 'ping-pong' mechanism: BLVRB first associates with both S-nitroso-CoA and protein substrate, nitric oxide group is then transferred from S-nitroso-CoA to Cys residues of BLVRB and from S-nitroso-BLVRB to the protein substrate. Inhibits insulin signaling by mediating nitrosylation of INSR and IRS1, leading to their inhibition. The sequence is that of Flavin reductase (NADPH) (BLVRB) from Aquarana catesbeiana (American bullfrog).